We begin with the raw amino-acid sequence, 599 residues long: Sulfite reductase [NADPH] flavoprotein alpha-component (599 aa).

The Flavodoxin-like domain occupies 64–202 (ITIISASQTG…AASEWRARVV (139 aa)). Residues 70–75 (SQTGNA), 117–120 (STQG), and 153–162 (LGDSSYEFFC) each bind FMN. The FAD-binding FR-type domain occupies 234–448 (DAPLAASLSV…IEHNDNFRLP (215 aa)). FAD is bound by residues threonine 322, alanine 356, 386–389 (RLYS), 404–406 (TVG), tyrosine 410, and 419–422 (GGAS). Residues 519 to 520 (SR), 525 to 529 (KIYVQ), and aspartate 561 each bind NADP(+). Tyrosine 599 serves as a coordination point for FAD.

It belongs to the NADPH-dependent sulphite reductase flavoprotein subunit CysJ family. The protein in the N-terminal section; belongs to the flavodoxin family. In the C-terminal section; belongs to the flavoprotein pyridine nucleotide cytochrome reductase family. Alpha(8)-beta(8). The alpha component is a flavoprotein, the beta component is a hemoprotein. The cofactor is FAD. FMN serves as cofactor.

It catalyses the reaction hydrogen sulfide + 3 NADP(+) + 3 H2O = sulfite + 3 NADPH + 4 H(+). It participates in sulfur metabolism; hydrogen sulfide biosynthesis; hydrogen sulfide from sulfite (NADPH route): step 1/1. Its function is as follows. Component of the sulfite reductase complex that catalyzes the 6-electron reduction of sulfite to sulfide. This is one of several activities required for the biosynthesis of L-cysteine from sulfate. The flavoprotein component catalyzes the electron flow from NADPH -&gt; FAD -&gt; FMN to the hemoprotein component. The protein is Sulfite reductase [NADPH] flavoprotein alpha-component of Escherichia coli O6:K15:H31 (strain 536 / UPEC).